Reading from the N-terminus, the 124-residue chain is Protein Rev (124 aa).

Residue serine 5 is modified to Phosphoserine; by host CK2. Residues 19–27 (IIKILYQSN) form a homomultimerization region. A disordered region spans residues 25 to 51 (QSNPYPSPEGTRKARRNRRRRWRARQK). The Nuclear localization signal and RNA-binding (RRE) signature appears at 35–51 (TRKARRNRRRRWRARQK). Residues 37–50 (KARRNRRRRWRARQ) are compositionally biased toward basic residues. The Nuclear export signal and binding to XPO1 signature appears at 74-85 (LELPELDKLSLQ). Residues 90-106 (TQDVGTSNTSQPQTATG) show a composition bias toward polar residues. The interval 90–124 (TQDVGTSNTSQPQTATGETVPAGGNYSILGKGAKN) is disordered.

It belongs to the HIV-1 REV protein family. As to quaternary structure, homomultimer; when bound to the RRE. Multimeric assembly is essential for activity and may involve XPO1. Binds to human KPNB1, XPO1, TNPO1, RANBP5 and IPO7. Interacts with the viral Integrase. Interacts with human KHDRBS1. Interacts with human NAP1; this interaction decreases Rev multimerization and stimulates its activity. Interacts with human DEAD-box helicases DDX3 and DDX24; these interactions may serve for viral RNA export to the cytoplasm and packaging, respectively. Interacts with human PSIP1; this interaction may inhibit HIV-1 DNA integration by promoting dissociation of the Integrase-LEDGF/p75 complex. Post-translationally, asymmetrically arginine dimethylated at one site by host PRMT6. Methylation impairs the RNA-binding activity and export of viral RNA from the nucleus to the cytoplasm. In terms of processing, phosphorylated by protein kinase CK2. Presence of, and maybe binding to the N-terminus of the regulatory beta subunit of CK2 is necessary for CK2-mediated Rev's phosphorylation.

Its subcellular location is the host nucleus. It localises to the host nucleolus. It is found in the host cytoplasm. Escorts unspliced or incompletely spliced viral pre-mRNAs (late transcripts) out of the nucleus of infected cells. These pre-mRNAs carry a recognition sequence called Rev responsive element (RRE) located in the env gene, that is not present in fully spliced viral mRNAs (early transcripts). This function is essential since most viral proteins are translated from unspliced or partially spliced pre-mRNAs which cannot exit the nucleus by the pathway used by fully processed cellular mRNAs. Rev itself is translated from a fully spliced mRNA that readily exits the nucleus. Rev's nuclear localization signal (NLS) binds directly to KPNB1/Importin beta-1 without previous binding to KPNA1/Importin alpha-1. KPNB1 binds to the GDP bound form of RAN (Ran-GDP) and targets Rev to the nucleus. In the nucleus, the conversion from Ran-GDP to Ran-GTP dissociates Rev from KPNB1 and allows Rev's binding to the RRE in viral pre-mRNAs. Rev multimerization on the RRE via cooperative assembly exposes its nuclear export signal (NES) to the surface. Rev can then form a complex with XPO1/CRM1 and Ran-GTP, leading to nuclear export of the complex. Conversion from Ran-GTP to Ran-GDP mediates dissociation of the Rev/RRE/XPO1/RAN complex, so that Rev can return to the nucleus for a subsequent round of export. Beside KPNB1, also seems to interact with TNPO1/Transportin-1, RANBP5/IPO5 and IPO7/RANBP7 for nuclear import. The nucleoporin-like HRB/RIP is an essential cofactor that probably indirectly interacts with Rev to release HIV RNAs from the perinuclear region to the cytoplasm. The protein is Protein Rev of Pan (chimpanzees).